The chain runs to 303 residues: GTPase Era (303 aa).

Residues 9 to 176 form the Era-type G domain; sequence KSGFVSIIGR…VEQIVEHMEE (168 aa). The tract at residues 17 to 24 is G1; sequence GRPNVGKS. Residue 17-24 coordinates GTP; the sequence is GRPNVGKS. The interval 43–47 is G2; the sequence is QTTRN. The segment at 64–67 is G3; sequence DTPG. Residues 64–68 and 126–129 contribute to the GTP site; these read DTPGI and NKID. The interval 126–129 is G4; the sequence is NKID. The G5 stretch occupies residues 155–157; sequence ISA. Positions 199–284 constitute a KH type-2 domain; it reads IREKVLHLTK…YLELWVKVQK (86 aa).

Belongs to the TRAFAC class TrmE-Era-EngA-EngB-Septin-like GTPase superfamily. Era GTPase family. In terms of assembly, monomer.

Its subcellular location is the cytoplasm. The protein resides in the cell membrane. Its function is as follows. An essential GTPase that binds both GDP and GTP, with rapid nucleotide exchange. Plays a role in 16S rRNA processing and 30S ribosomal subunit biogenesis and possibly also in cell cycle regulation and energy metabolism. This chain is GTPase Era, found in Shouchella clausii (strain KSM-K16) (Alkalihalobacillus clausii).